We begin with the raw amino-acid sequence, 189 residues long: GMP synthase [glutamine-hydrolyzing] subunit A (189 aa).

In terms of domain architecture, Glutamine amidotransferase type-1 spans 3–187 (RIDVIDNHGQ…LSVCDQQSVA (185 aa)). Cys73 (nucleophile) is an active-site residue. Residues His161 and Glu163 contribute to the active site.

Heterodimer composed of a glutamine amidotransferase subunit (A) and a GMP-binding subunit (B).

The catalysed reaction is XMP + L-glutamine + ATP + H2O = GMP + L-glutamate + AMP + diphosphate + 2 H(+). It participates in purine metabolism; GMP biosynthesis; GMP from XMP (L-Gln route): step 1/1. Functionally, catalyzes the synthesis of GMP from XMP. In Haloarcula marismortui (strain ATCC 43049 / DSM 3752 / JCM 8966 / VKM B-1809) (Halobacterium marismortui), this protein is GMP synthase [glutamine-hydrolyzing] subunit A.